A 220-amino-acid chain; its full sequence is MQVNIAPSWKPYLEEEFNKPYFEQLAAFVKAEYKSNTIYPPAKQIFNAFELCSFDNTKVVILGQDPYHGFKQANGLSFSVGKEVRMPPSLVNIFKEIESDLGHPVPTNGDLTRWAQQGVLLLNATLTVREKQPGSHQNKGWETFTDTIISILSQHKQHLVFMLWGNYAQKKEVLIDTSKHLVLKSAHPSPYAADRGFFGNKHFSKANAYLVEHGLTPINW.

Aspartate 65 functions as the Proton acceptor in the catalytic mechanism.

This sequence belongs to the uracil-DNA glycosylase (UDG) superfamily. UNG family.

It localises to the cytoplasm. The enzyme catalyses Hydrolyzes single-stranded DNA or mismatched double-stranded DNA and polynucleotides, releasing free uracil.. Its function is as follows. Excises uracil residues from the DNA which can arise as a result of misincorporation of dUMP residues by DNA polymerase or due to deamination of cytosine. This Amoebophilus asiaticus (strain 5a2) protein is Uracil-DNA glycosylase.